The sequence spans 145 residues: Deoxyuridine 5'-triphosphate nucleotidohydrolase (145 aa).

Substrate-binding positions include 65-67, Asn78, 82-84, and Met92; these read RSG and TID.

It belongs to the dUTPase family. The cofactor is Mg(2+).

The enzyme catalyses dUTP + H2O = dUMP + diphosphate + H(+). It functions in the pathway pyrimidine metabolism; dUMP biosynthesis; dUMP from dCTP (dUTP route): step 2/2. This enzyme is involved in nucleotide metabolism: it produces dUMP, the immediate precursor of thymidine nucleotides and it decreases the intracellular concentration of dUTP so that uracil cannot be incorporated into DNA. This is Deoxyuridine 5'-triphosphate nucleotidohydrolase from Chlorobium phaeobacteroides (strain BS1).